The primary structure comprises 750 residues: Coiled-coil domain-containing protein 142 (750 aa).

Positions 1–29 (MAQASRSGSLPPLVIVPPLRAQPGGTGEE) are disordered. The stretch at 87 to 110 (ALQRLRAVLLRLHREREQLLQARD) forms a coiled coil. The tract at residues 687–714 (LEPPLQPGTSPAQTGQLQSTLGGRGPSP) is disordered. Polar residues predominate over residues 693–707 (PGTSPAQTGQLQSTL).

This is Coiled-coil domain-containing protein 142 (CCDC142) from Homo sapiens (Human).